The sequence spans 954 residues: Protein teashirt (954 aa).

3 disordered regions span residues leucine 20 to serine 91, glutamate 167 to glycine 207, and valine 276 to alanine 331. The span at histidine 47–glycine 57 shows a compositional bias: gly residues. Residues serine 292–proline 303 are compositionally biased toward polar residues. Gly residues predominate over residues serine 318–glycine 328. The C2H2-type 1 zinc finger occupies phenylalanine 354–histidine 378. The disordered stretch occupies residues valine 383–proline 444. The segment covering serine 417–asparagine 428 has biased composition (low complexity). 2 C2H2-type zinc fingers span residues leucine 466–histidine 490 and leucine 533–histidine 557. Disordered regions lie at residues leucine 563 to aspartate 622, phenylalanine 689 to valine 714, and threonine 748 to alanine 935. The span at alanine 568 to glutamate 578 shows a compositional bias: basic residues. The segment covering lysine 579 to glutamate 588 has biased composition (basic and acidic residues). A compositionally biased stretch (low complexity) spans alanine 696 to serine 712. 2 positions are modified to phosphoserine: serine 750 and serine 758. Positions glycine 778–phenylalanine 807 are enriched in basic and acidic residues. The segment covering proline 842–proline 851 has biased composition (low complexity). Composition is skewed to polar residues over residues alanine 862–glutamate 885 and aspartate 893–serine 907. Positions alanine 910 to glycine 926 are enriched in low complexity.

The protein belongs to the teashirt C2H2-type zinc-finger protein family. Binds arm. Shows a dynamic expression pattern during embryogenesis. Expressed in the embryonic trunk region (PS 3-13) with expression strongest in the thoracic segments. Expressed in a small group of cells corresponding to the anal tuft from stage 14. Strongly expressed in the embryonic ventral nerve cord. Also expressed in the proximal domain of the leg imaginal disk and in the region of the wing disk that will give rise to the proximal wing hinge. Expressed at high levels in the anterior and central embryonic midgut mesoderm and in the embryonic midgut endoderm. Expressed at a low level in more posterior visceral mesoderm of the gut. From stage 12 onwards, tsh and tio are colocalized in some cells of the CNS, trunk epidermis, hindgut and Malpighian tubules.

Its subcellular location is the nucleus. The protein localises to the cytoplasm. Homeotic protein that acts downstream of Arm in the Wg cascade during embryogenesis to determine segment identity throughout the entire trunk. Acts cooperatively with other trunk homeotic proteins to repress head homeotic genes and therefore repress head segmental identity. Necessary, in combination with Scr, for the formation of the prothoracic segment. Promotes eye development in the dorsal region of the eye disk and suppresses eye development in the ventral region in combination with Wg-signaling and several early dorso-ventral eye patterning genes. Required for proper development of proximal leg segments. Has differential functions along the dorso-ventral axs of the antennal and leg disks. May play a role in wing hinge development. Possible involvement in chromatin structure for modulation of transcription. Binds DNA and can act as both a transcriptional repressor and activator. Positively regulates its own expression as well as that of Dll. Negatively regulates the expression of mod. Required for Wg-mediated transcriptional repression of Ubx in the midgut. Also represses transcription of lab in the midgut and is necessary for the proper formation of anterior and central midgut structures. Tiptop (tio) and teashirt (tsh) have, on the whole, common activities. Tio and tsh repress each other's expression and tsh has a crucial role for trunk patterning that is in part masked by ectopic expression of tiptop. Both genes share a common activity required for the activation of Ser and svb and the maintenance of en and wg. This is Protein teashirt (tsh) from Drosophila melanogaster (Fruit fly).